Here is a 576-residue protein sequence, read N- to C-terminus: MMRMFRYTNTLQRTAKISHVLWARNYAKDVRFGPEVRAMMLQGVDVLADAVAVTMGPKGRNVIIEQSWGSPKITKDGVTVAKSIALKDKFQNIGAKLVQDVANNTNEEAGDGTTTATVLARAIAKEGFEKISRGASPVEIRRGVMLAIETVKDNLRRLSRPVNTPEEICQVATISANGDKSVGNLISEAIKKVGRDGVITVKDGKTLCDELEVIEGMKFDRGYISPYFINTSKGAKVEFQDALLLFCEKKIKSAPSIVPALELANAQRKPLVIIAEDLEAEALSTLVVNRLKVGLQVCAVKAPGFGDNRKENLMDMAVATGGIVFGDEANMVRLEDIKMSDFGRVGEVVVSKDDTMLLKGKGQKAEVEKRVEGLREAIKESTSSYEKEKMQERLARLSSGVALLRVGGSSDVEVSEKKDRVIDALNATRAAVEEGIVPGGGTALLRCIQKLNDLKGANEDQNMGIEIIRRALRMPCLTIAKNAGVDGAMVVAKVEILDGDYGYDALKGEYGNMIERGIIDPTKVVRTAISDAAGVASLLTTAEAVVTELPLEEAAAAGAAAGLGALGGMGMGGMGM.

A mitochondrion-targeting transit peptide spans 1-61 (MMRMFRYTNT…AVTMGPKGRN (61 aa)).

It belongs to the chaperonin (HSP60) family. First detectable expression is seen in the posterior part of the dorsal tracheal trunk at stage 14-15, which marks the beginning of terminal tracheation. In the larval gut, expression in proventriculus is stronger than in midgut and hindgut. Malpighian tubules shows low expression and late third instar larval imaginal disks and brain showed moderate expression. In larval ovary and testis, expression is strong in the posterior region.

The protein localises to the mitochondrion matrix. Its function is as follows. Prevents misfolding and promotes the refolding and proper assembly of unfolded polypeptides generated under stress conditions. Essential for proper development of trachea, spermatogonia and spermatocytes. The sequence is that of 60 kDa heat shock protein homolog 2, mitochondrial (Hsp60C) from Drosophila melanogaster (Fruit fly).